A 737-amino-acid chain; its full sequence is Protein OPG064 (737 aa).

Met1 is modified (N-acetylmethionine; by host). The cysteines at positions 496 and 535 are disulfide-linked.

It belongs to the orthopoxvirus OPG064 family. Interacts with host KLC2; this interaction promotes IEV trafficking by engaging the host kinesin-1 complex. Interacts with protein OPG056/F12. In terms of processing, N-acetylated on initiator methionine by host.

Plays a role in intracellular enveloped virus (IEV) transport to the cell surface on microtubules. Together with protein OPG056/F12, forms a complex that interacts with host KLC2 (kinesin light chain isoform 2) to engage the kinesin-1 complex and thereby promote IEV trafficking. The sequence is that of Protein OPG064 (OPG064) from Bos taurus (Bovine).